A 56-amino-acid chain; its full sequence is MGFADLWYSHPRKYGQGSRFCRACSNNHGMIRKYGLNICRQCFREYAKDIGFRKLD.

Residues cysteine 21, cysteine 24, cysteine 39, and cysteine 42 each contribute to the Zn(2+) site.

This sequence belongs to the universal ribosomal protein uS14 family. As to quaternary structure, component of the 40S small ribosomal subunit. It depends on Zn(2+) as a cofactor.

Its subcellular location is the cytoplasm. It is found in the cytosol. It localises to the rough endoplasmic reticulum. This chain is Small ribosomal subunit protein uS14 (RpS29), found in Culex quinquefasciatus (Southern house mosquito).